The following is a 603-amino-acid chain: Bifunctional 3-dehydroquinate dehydratase/shikimate dehydrogenase, chloroplastic (603 aa).

Positions Met1–Leu10 are enriched in polar residues. Positions Met1–Leu22 are disordered. The N-terminal 66 residues, Met1–Arg66, are a transit peptide targeting the chloroplast. The segment covering Pro13 to Leu22 has biased composition (low complexity). Positions Ile96–Leu313 are 3-dehydroquinate dehydratase. 3-dehydroshikimate is bound by residues Glu124, Arg126, and Arg155. His214 functions as the Proton acceptor; for 3-dehydroquinate dehydratase activity in the catalytic mechanism. 3-dehydroshikimate contacts are provided by Lys241, Arg279, Ser300, and Gln304. Lys241 acts as the Schiff-base intermediate with substrate; for 3-dehydroquinate dehydratase activity in catalysis. The interval Ile328 to Leu558 is shikimate dehydrogenase. Ser336, Ser338, Thr381, Lys385, Asn406, and Asp423 together coordinate shikimate. Lys385 acts as the For shikimate dehydrogenase activity in catalysis. The active-site For shikimate dehydrogenase activity is the Asp423. NADP(+) is bound by residues Ala461, Gly463, Ala464, Asn483, Thr485, Arg488, Met525, and Ala548. Residue Tyr550 coordinates shikimate. NADP(+) is bound at residue Gly571. Residues Gln578 and Gln582 each contribute to the shikimate site.

The protein in the N-terminal section; belongs to the type-I 3-dehydroquinase family. In the C-terminal section; belongs to the shikimate dehydrogenase family. As to quaternary structure, monomer.

It localises to the plastid. It is found in the chloroplast. It carries out the reaction 3-dehydroquinate = 3-dehydroshikimate + H2O. The catalysed reaction is shikimate + NADP(+) = 3-dehydroshikimate + NADPH + H(+). It participates in metabolic intermediate biosynthesis; chorismate biosynthesis; chorismate from D-erythrose 4-phosphate and phosphoenolpyruvate: step 3/7. It functions in the pathway metabolic intermediate biosynthesis; chorismate biosynthesis; chorismate from D-erythrose 4-phosphate and phosphoenolpyruvate: step 4/7. Functionally, bifunctional dehydroquinate dehydratase-shikimate dehydrogenase enzyme that catalyzes two steps in the chorismate biosynthesis pathway. In Arabidopsis thaliana (Mouse-ear cress), this protein is Bifunctional 3-dehydroquinate dehydratase/shikimate dehydrogenase, chloroplastic.